The sequence spans 345 residues: ATP-dependent (S)-NAD(P)H-hydrate dehydratase (345 aa).

The YjeF C-terminal domain maps to 9–332 (ILSLARSMIP…DMVGEVYEEV (324 aa)). (6S)-NADPHX-binding positions include glycine 113 and 170-176 (NVMEFKR). ATP contacts are provided by residues 208 to 212 (KGPSD) and 241 to 250 (GGLKRVGGQG). Aspartate 251 provides a ligand contact to (6S)-NADPHX.

It belongs to the NnrD/CARKD family. Mg(2+) is required as a cofactor.

The protein localises to the cytoplasm. It carries out the reaction (6S)-NADHX + ATP = ADP + phosphate + NADH + H(+). It catalyses the reaction (6S)-NADPHX + ATP = ADP + phosphate + NADPH + H(+). In terms of biological role, catalyzes the dehydration of the S-form of NAD(P)HX at the expense of ATP, which is converted to ADP. Together with NAD(P)HX epimerase, which catalyzes the epimerization of the S- and R-forms, the enzyme allows the repair of both epimers of NAD(P)HX, a damaged form of NAD(P)H that is a result of enzymatic or heat-dependent hydration. The sequence is that of ATP-dependent (S)-NAD(P)H-hydrate dehydratase from Cryptococcus neoformans var. neoformans serotype D (strain JEC21 / ATCC MYA-565) (Filobasidiella neoformans).